The chain runs to 597 residues: tRNA uridine 5-carboxymethylaminomethyl modification enzyme MnmG (597 aa).

10 to 15 (GGGHAG) serves as a coordination point for FAD. 267–281 (GPRYCPSIEDKVVRF) is a binding site for NAD(+).

It belongs to the MnmG family. As to quaternary structure, homodimer. Heterotetramer of two MnmE and two MnmG subunits. FAD is required as a cofactor.

It is found in the cytoplasm. Its function is as follows. NAD-binding protein involved in the addition of a carboxymethylaminomethyl (cmnm) group at the wobble position (U34) of certain tRNAs, forming tRNA-cmnm(5)s(2)U34. This chain is tRNA uridine 5-carboxymethylaminomethyl modification enzyme MnmG, found in Thermus thermophilus (strain ATCC 27634 / DSM 579 / HB8).